The primary structure comprises 384 residues: Dual-specificity RNA methyltransferase RlmN (384 aa).

E105 serves as the catalytic Proton acceptor. In terms of domain architecture, Radical SAM core spans 111 to 350 (EDDRATLCVS…TIVRKTRGDD (240 aa)). Residues C118 and C355 are joined by a disulfide bond. C125, C129, and C132 together coordinate [4Fe-4S] cluster. Residues 179-180 (GE), S211, 233-235 (SLH), and N312 contribute to the S-adenosyl-L-methionine site. The active-site S-methylcysteine intermediate is the C355.

The protein belongs to the radical SAM superfamily. RlmN family. Requires [4Fe-4S] cluster as cofactor.

Its subcellular location is the cytoplasm. It catalyses the reaction adenosine(2503) in 23S rRNA + 2 reduced [2Fe-2S]-[ferredoxin] + 2 S-adenosyl-L-methionine = 2-methyladenosine(2503) in 23S rRNA + 5'-deoxyadenosine + L-methionine + 2 oxidized [2Fe-2S]-[ferredoxin] + S-adenosyl-L-homocysteine. It carries out the reaction adenosine(37) in tRNA + 2 reduced [2Fe-2S]-[ferredoxin] + 2 S-adenosyl-L-methionine = 2-methyladenosine(37) in tRNA + 5'-deoxyadenosine + L-methionine + 2 oxidized [2Fe-2S]-[ferredoxin] + S-adenosyl-L-homocysteine. Functionally, specifically methylates position 2 of adenine 2503 in 23S rRNA and position 2 of adenine 37 in tRNAs. m2A2503 modification seems to play a crucial role in the proofreading step occurring at the peptidyl transferase center and thus would serve to optimize ribosomal fidelity. This chain is Dual-specificity RNA methyltransferase RlmN, found in Escherichia fergusonii (strain ATCC 35469 / DSM 13698 / CCUG 18766 / IAM 14443 / JCM 21226 / LMG 7866 / NBRC 102419 / NCTC 12128 / CDC 0568-73).